Here is a 105-residue protein sequence, read N- to C-terminus: Small ribosomal subunit protein uS10 (105 aa).

This sequence belongs to the universal ribosomal protein uS10 family. In terms of assembly, part of the 30S ribosomal subunit.

Its function is as follows. Involved in the binding of tRNA to the ribosomes. The protein is Small ribosomal subunit protein uS10 of Thermus thermophilus (strain ATCC BAA-163 / DSM 7039 / HB27).